The chain runs to 342 residues: MSGMHDFLFNTNLGLLIITALQALAILVPLMLMVAYATVFERKVLAAIGLRKGPNVVGPWGMLQAFADAGKMLLKETIIPDGANKVLFILAPLLTFILAMIAWAVVPVNDGWAVANINVGVLYLFAISSLGVYGVIIAGWASNSKYAFLGALRAAAQMVSYEVSIGFVMVAILLCVGSLNLNDVVLAQKHVWFVLPMLPMAVIFFISGLAETNRSPFDIVEGESEIVAGHMVEYSAMAYALFFLGEYANMFMICAMTTLLFLGGWLPPFDIVPLNWVPGPIWFVLKVCALMFVFFWVRGTVPRYRYDQLMRLGWKVFLPFSLVWLLLTACVLELAGWLPTVN.

8 helical membrane passes run L15–A35, V86–V106, V119–G139, V159–L179, H190–A210, F251–I271, V277–V297, and V316–G336.

This sequence belongs to the complex I subunit 1 family. NDH-1 is composed of 14 different subunits. Subunits NuoA, H, J, K, L, M, N constitute the membrane sector of the complex.

It is found in the cell inner membrane. It catalyses the reaction a quinone + NADH + 5 H(+)(in) = a quinol + NAD(+) + 4 H(+)(out). In terms of biological role, NDH-1 shuttles electrons from NADH, via FMN and iron-sulfur (Fe-S) centers, to quinones in the respiratory chain. The immediate electron acceptor for the enzyme in this species is believed to be ubiquinone. Couples the redox reaction to proton translocation (for every two electrons transferred, four hydrogen ions are translocated across the cytoplasmic membrane), and thus conserves the redox energy in a proton gradient. This subunit may bind ubiquinone. In Granulibacter bethesdensis (strain ATCC BAA-1260 / CGDNIH1), this protein is NADH-quinone oxidoreductase subunit H.